Reading from the N-terminus, the 299-residue chain is NAD kinase (299 aa).

The active-site Proton acceptor is the aspartate 75. Residues 75 to 76, 149 to 150, arginine 177, aspartate 179, 190 to 195, alanine 214, and glutamine 248 each bind NAD(+); these read DG, ND, and TAYALS.

Belongs to the NAD kinase family. Requires a divalent metal cation as cofactor.

It is found in the cytoplasm. The catalysed reaction is NAD(+) + ATP = ADP + NADP(+) + H(+). In terms of biological role, involved in the regulation of the intracellular balance of NAD and NADP, and is a key enzyme in the biosynthesis of NADP. Catalyzes specifically the phosphorylation on 2'-hydroxyl of the adenosine moiety of NAD to yield NADP. The polypeptide is NAD kinase (Burkholderia thailandensis (strain ATCC 700388 / DSM 13276 / CCUG 48851 / CIP 106301 / E264)).